A 201-amino-acid polypeptide reads, in one-letter code: LexA repressor 1 (201 aa).

The H-T-H motif DNA-binding region spans 28–48 (LREIAAHLKISGTLGVSKHLE). Catalysis depends on for autocatalytic cleavage activity residues S120 and K157.

The protein belongs to the peptidase S24 family. In terms of assembly, homodimer.

It carries out the reaction Hydrolysis of Ala-|-Gly bond in repressor LexA.. Functionally, represses a number of genes involved in the response to DNA damage (SOS response), including recA and lexA. In the presence of single-stranded DNA, RecA interacts with LexA causing an autocatalytic cleavage which disrupts the DNA-binding part of LexA, leading to derepression of the SOS regulon and eventually DNA repair. The polypeptide is LexA repressor 1 (Geobacter sulfurreducens (strain ATCC 51573 / DSM 12127 / PCA)).